Reading from the N-terminus, the 185-residue chain is Elongation factor P (185 aa).

This sequence belongs to the elongation factor P family.

The protein resides in the cytoplasm. Its pathway is protein biosynthesis; polypeptide chain elongation. Its function is as follows. Involved in peptide bond synthesis. Stimulates efficient translation and peptide-bond synthesis on native or reconstituted 70S ribosomes in vitro. Probably functions indirectly by altering the affinity of the ribosome for aminoacyl-tRNA, thus increasing their reactivity as acceptors for peptidyl transferase. This is Elongation factor P from Burkholderia cenocepacia (strain HI2424).